Here is a 95-residue protein sequence, read N- to C-terminus: Co-chaperonin GroES (95 aa).

The protein belongs to the GroES chaperonin family. As to quaternary structure, heptamer of 7 subunits arranged in a ring. Interacts with the chaperonin GroEL.

The protein localises to the cytoplasm. Its function is as follows. Together with the chaperonin GroEL, plays an essential role in assisting protein folding. The GroEL-GroES system forms a nano-cage that allows encapsulation of the non-native substrate proteins and provides a physical environment optimized to promote and accelerate protein folding. GroES binds to the apical surface of the GroEL ring, thereby capping the opening of the GroEL channel. This Beijerinckia indica subsp. indica (strain ATCC 9039 / DSM 1715 / NCIMB 8712) protein is Co-chaperonin GroES.